Here is a 258-residue protein sequence, read N- to C-terminus: Flagellar L-ring protein (258 aa).

A signal peptide spans 1-15; that stretch reads MKRIVCLALFLSMTG. A lipid anchor (N-palmitoyl cysteine) is attached at Cys16. The S-diacylglycerol cysteine moiety is linked to residue Cys16.

Belongs to the FlgH family. The basal body constitutes a major portion of the flagellar organelle and consists of four rings (L,P,S, and M) mounted on a central rod.

Its subcellular location is the cell outer membrane. It localises to the bacterial flagellum basal body. Its function is as follows. Assembles around the rod to form the L-ring and probably protects the motor/basal body from shearing forces during rotation. The sequence is that of Flagellar L-ring protein from Vibrio atlanticus (strain LGP32) (Vibrio splendidus (strain Mel32)).